Reading from the N-terminus, the 363-residue chain is Phosphoserine aminotransferase (363 aa).

An L-glutamate-binding site is contributed by arginine 42. Residues 76–77 (GR), tryptophan 102, threonine 156, aspartate 175, and glutamine 198 each bind pyridoxal 5'-phosphate. Position 199 is an N6-(pyridoxal phosphate)lysine (lysine 199). Pyridoxal 5'-phosphate is bound at residue 240 to 241 (NT).

The protein belongs to the class-V pyridoxal-phosphate-dependent aminotransferase family. SerC subfamily. As to quaternary structure, homodimer. Pyridoxal 5'-phosphate serves as cofactor.

Its subcellular location is the cytoplasm. It carries out the reaction O-phospho-L-serine + 2-oxoglutarate = 3-phosphooxypyruvate + L-glutamate. It catalyses the reaction 4-(phosphooxy)-L-threonine + 2-oxoglutarate = (R)-3-hydroxy-2-oxo-4-phosphooxybutanoate + L-glutamate. It functions in the pathway amino-acid biosynthesis; L-serine biosynthesis; L-serine from 3-phospho-D-glycerate: step 2/3. It participates in cofactor biosynthesis; pyridoxine 5'-phosphate biosynthesis; pyridoxine 5'-phosphate from D-erythrose 4-phosphate: step 3/5. Functionally, catalyzes the reversible conversion of 3-phosphohydroxypyruvate to phosphoserine and of 3-hydroxy-2-oxo-4-phosphonooxybutanoate to phosphohydroxythreonine. The chain is Phosphoserine aminotransferase from Shewanella frigidimarina (strain NCIMB 400).